The following is a 135-amino-acid chain: Histone H2A (135 aa).

This sequence belongs to the histone H2A family. The nucleosome is a histone octamer containing two molecules each of H2A, H2B, H3 and H4 assembled in one H3-H4 heterotetramer and two H2A-H2B heterodimers. The octamer wraps approximately 147 bp of DNA.

It localises to the nucleus. It is found in the chromosome. Core component of nucleosome. Nucleosomes wrap and compact DNA into chromatin, limiting DNA accessibility to the cellular machineries which require DNA as a template. Histones thereby play a central role in transcription regulation, DNA repair, DNA replication and chromosomal stability. DNA accessibility is regulated via a complex set of post-translational modifications of histones, also called histone code, and nucleosome remodeling. This is Histone H2A from Trypanosoma cruzi.